Consider the following 1927-residue polypeptide: Lactase/phlorizin hydrolase (1927 aa).

Residues 1 to 19 (MELSWHVVFIALLSFSCWG) form the signal peptide. The propeptide at 20 to 868 (SDWESDRNFI…NTVNLPSKVR (849 aa)) is XBetaGly. Residues 20–1882 (SDWESDRNFI…LMLGTTEAQT (1863 aa)) lie on the Extracellular side of the membrane. Asn-42 carries N-linked (GlcNAc...) asparagine glycosylation. Residues 44 to 286 (SGLLGDQSSN…FIFNLKLPDC (243 aa)) are glycosyl hydrolase-1 1; Region I. Residues 362–855 (IWEAFANQSR…GFLTKGAKRL (494 aa)) form a glycosyl hydrolase-1 2; Region II region. N-linked (GlcNAc...) asparagine glycans are attached at residues Asn-368, Asn-418, Asn-512, Asn-821, Asn-934, Asn-946, and Asn-989. Residues 902-1366 (TFRDDFLWGV…EVITNNGMPL (465 aa)) form a glycosyl hydrolase-1 3; Region III. Phlorizin hydrolase/glycosylceramidase activity region. The active-site Proton donor; for phlorizin hydrolase/Glycosylceramidase activity is Glu-1065. Asn-1174 carries an N-linked (GlcNAc...) asparagine glycan. Residues 1220–1244 (RLNPPSYEDDQEMAEEEDPSWPSTA) are disordered. The span at 1226–1238 (YEDDQEMAEEEDP) shows a compositional bias: acidic residues. Residue Glu-1273 is the Nucleophile; for phlorizin hydrolase/Glycosylceramidase activity of the active site. N-linked (GlcNAc...) asparagine glycans are attached at residues Asn-1340 and Asn-1508. The segment at 1373-1846 (LYGRFPEGFI…CNGFPDPATG (474 aa)) is glycosyl hydrolase-1 4; Region IV. Lactase activity. Residue Glu-1538 is the Proton donor; for lactase activity of the active site. A required for homodimerization and transport to the plasma membrane region spans residues 1647–1927 (RDRSLAAGLN…QQELSPVSSF (281 aa)). Asn-1656 and Asn-1672 each carry an N-linked (GlcNAc...) asparagine glycan. Glu-1749 acts as the Nucleophile; for lactase activity in catalysis. Asn-1761 and Asn-1814 each carry an N-linked (GlcNAc...) asparagine glycan. A helical transmembrane segment spans residues 1883–1901 (ALYVLFSLVLLGVCGLAFL). Topologically, residues 1902–1927 (SYKYCKRSKQGKTQRSQQELSPVSSF) are cytoplasmic.

The protein belongs to the glycosyl hydrolase 1 family. Homodimer. N-glycosylated. In terms of tissue distribution, specifically expressed in small intestine.

The protein resides in the apical cell membrane. The catalysed reaction is lactose + H2O = beta-D-galactose + D-glucose. It carries out the reaction phlorizin + H2O = phloretin + beta-D-glucose. It catalyses the reaction D-cellobiose + H2O = beta-D-glucose + D-glucose. The enzyme catalyses quercetin 4'-O-beta-D-glucoside + H2O = quercetin + beta-D-glucose. The catalysed reaction is quercetin 3-O-beta-D-glucoside + H2O = quercetin + beta-D-glucose. It carries out the reaction kaempferol 3-O-beta-D-glucoside + H2O = kaempferol + beta-D-glucose. It catalyses the reaction luteolin 7-O-beta-D-glucoside + H2O = luteolin + beta-D-glucose. The enzyme catalyses luteolin 4'-O-beta-D-glucoside + H2O = luteolin + beta-D-glucose. The catalysed reaction is (2S)-naringenin 7-O-beta-D-glucoside + H2O = (2S)-naringenin + beta-D-glucose. It carries out the reaction eriodictyol-7-O-beta-D-glucoside + H2O = (S)-eriodictyol + beta-D-glucose. It catalyses the reaction apigenin 7-O-beta-D-glucoside + H2O = apigenin + beta-D-glucose. The enzyme catalyses daidzein 7-O-beta-D-glucoside + H2O = daidzein + beta-D-glucose + H(+). The catalysed reaction is genistein 7-O-beta-D-glucoside + H2O = genistein + beta-D-glucose. It carries out the reaction a beta-D-galactosyl-N-acylsphingosine + H2O = a ceramide + beta-D-galactose.. It catalyses the reaction beta-D-glucosyl-(1&lt;-&gt;1')-N-hexadecanoylsphing-4-enine + H2O = N-hexadecanoylsphing-4-enine + beta-D-glucose. The enzyme catalyses beta-D-galactosyl-(1&lt;-&gt;1')-N-hexadecanoylsphing-4-enine + H2O = beta-D-galactose + N-hexadecanoylsphing-4-enine. The catalysed reaction is beta-D-galactosyl-(1&lt;-&gt;1')-N-hexadecanoylsphinganine + H2O = N-hexadecanoylsphinganine + beta-D-galactose. It carries out the reaction beta-D-glucosyl-(1&lt;-&gt;1')-N-hexadecanoylsphinganine + H2O = N-hexadecanoylsphinganine + beta-D-glucose. Its function is as follows. Broad specificity glycosidase of the intestinal brush border membrane that hydrolyzes lactose, the main sugar in mammalian milk, to produce D-glucose and D-galactose. The mature protein is composed of two domains that catalyze the hydrolysis of beta-glucopyranosides and beta-galactopyranosides, with a preference for hydrophilic aglycones (in lactose and cellobiose) for one domain and hydrophobic aglycones (in phlorizin and glycosylceramides) for the other. The protein is Lactase/phlorizin hydrolase of Homo sapiens (Human).